The sequence spans 265 residues: Formyltransferase/hydrolase complex Fhc subunit C (265 aa).

The protein belongs to the FwdC/FmdC family. In terms of assembly, octaheteromer. Part of the formyltransferase/hydrolase complex fhc; composed of FhcA, FhcB, FhcC and FhcD.

It is found in the cytoplasm. It participates in one-carbon metabolism; formaldehyde degradation; formate from formaldehyde (H(4)MPT route): step 4/5. Involved in the transformation of 5-formyl tetrahydromethanopterin (5-formyl-H(4)MPT) to methanofuran (MFR) and formate via the formylmethanofuran (formyl-MFR). This is Formyltransferase/hydrolase complex Fhc subunit C (fhcC) from Methylorubrum extorquens (strain ATCC 14718 / DSM 1338 / JCM 2805 / NCIMB 9133 / AM1) (Methylobacterium extorquens).